Consider the following 329-residue polypeptide: BRISC and BRCA1-A complex member 1 (329 aa).

N-acetylmethionine is present on Met-1. The interval Met-1 to Thr-86 is disordered. A Phosphoserine modification is found at Ser-8. Over residues Thr-10 to His-19 the composition is skewed to acidic residues. Ser-29, Ser-49, Ser-57, and Ser-62 each carry phosphoserine. Position 65 is a phosphothreonine (Thr-65). Residue Ser-66 is modified to Phosphoserine. A VWFA-like region spans residues Val-95–Leu-298.

Belongs to the BABAM1 family. In terms of assembly, component of the ARISC complex, at least composed of UIMC1/RAP80, ABRAXAS1, BRCC3/BRCC36, BABAM2 and BABAM1/NBA1. Component of the BRCA1-A complex, at least composed of BRCA1, BARD1, UIMC1/RAP80, ABRAXAS1, BRCC3/BRCC36, BABAM2 and BABAM1/NBA1. In the BRCA1-A complex, interacts directly with ABRAXAS1 and BABAM2. Component of the BRISC complex, at least composed of ABRAXAS2, BRCC3/BRCC36, BABAM2 and BABAM1/NBA1. Identified in a complex with SHMT2 and the other subunits of the BRISC complex.

The protein resides in the cytoplasm. Its subcellular location is the nucleus. In terms of biological role, component of the BRCA1-A complex, a complex that specifically recognizes 'Lys-63'-linked ubiquitinated histones H2A and H2AX at DNA lesions sites, leading to target the BRCA1-BARD1 heterodimer to sites of DNA damage at double-strand breaks (DSBs). The BRCA1-A complex also possesses deubiquitinase activity that specifically removes 'Lys-63'-linked ubiquitin on histones H2A and H2AX. In the BRCA1-A complex, it is required for the complex integrity and its localization at DSBs. Component of the BRISC complex, a multiprotein complex that specifically cleaves 'Lys-63'-linked ubiquitin in various substrates. In these 2 complexes, it is probably required to maintain the stability of BABAM2 and help the 'Lys-63'-linked deubiquitinase activity mediated by BRCC3/BRCC36 component. The BRISC complex is required for normal mitotic spindle assembly and microtubule attachment to kinetochores via its role in deubiquitinating NUMA1. Plays a role in interferon signaling via its role in the deubiquitination of the interferon receptor IFNAR1; deubiquitination increases IFNAR1 activity by enhancing its stability and cell surface expression. Down-regulates the response to bacterial lipopolysaccharide (LPS) via its role in IFNAR1 deubiquitination. The sequence is that of BRISC and BRCA1-A complex member 1 (BABAM1) from Callithrix jacchus (White-tufted-ear marmoset).